The chain runs to 298 residues: Porphobilinogen deaminase (298 aa).

An S-(dipyrrolylmethanemethyl)cysteine modification is found at Cys-239.

This sequence belongs to the HMBS family. In terms of assembly, monomer. Requires dipyrromethane as cofactor.

It catalyses the reaction 4 porphobilinogen + H2O = hydroxymethylbilane + 4 NH4(+). It functions in the pathway porphyrin-containing compound metabolism; protoporphyrin-IX biosynthesis; coproporphyrinogen-III from 5-aminolevulinate: step 2/4. Functionally, tetrapolymerization of the monopyrrole PBG into the hydroxymethylbilane pre-uroporphyrinogen in several discrete steps. The protein is Porphobilinogen deaminase of Orientia tsutsugamushi (strain Boryong) (Rickettsia tsutsugamushi).